The sequence spans 464 residues: Clusterin-like protein 1 (464 aa).

An N-terminal signal peptide occupies residues 1–20; it reads MQPPLFVISVYLLWLKYCDS. Positions 56-109 form a coiled coil; that stretch reads IKQMKIMMERREEEHAKLMKALKKCKEEKQEAQKLMNEVQERLEEEEKLCQASS. 5 cysteine pairs are disulfide-bonded: C105-C331, C116-C323, C119-C320, C124-C313, and C131-C303. 6 N-linked (GlcNAc...) asparagine glycosylation sites follow: N195, N255, N309, N349, N398, and N429.

It belongs to the clusterin family.

Its subcellular location is the secreted. This Rattus norvegicus (Rat) protein is Clusterin-like protein 1.